We begin with the raw amino-acid sequence, 179 residues long: Large ribosomal subunit protein uL5 (179 aa).

It belongs to the universal ribosomal protein uL5 family. In terms of assembly, part of the 50S ribosomal subunit; part of the 5S rRNA/L5/L18/L25 subcomplex. Contacts the 5S rRNA and the P site tRNA. Forms a bridge to the 30S subunit in the 70S ribosome.

Its function is as follows. This is one of the proteins that bind and probably mediate the attachment of the 5S RNA into the large ribosomal subunit, where it forms part of the central protuberance. In the 70S ribosome it contacts protein S13 of the 30S subunit (bridge B1b), connecting the 2 subunits; this bridge is implicated in subunit movement. Contacts the P site tRNA; the 5S rRNA and some of its associated proteins might help stabilize positioning of ribosome-bound tRNAs. The polypeptide is Large ribosomal subunit protein uL5 (Halothermothrix orenii (strain H 168 / OCM 544 / DSM 9562)).